The chain runs to 224 residues: Jacalin-related lectin 24 (224 aa).

One can recognise a Jacalin-type lectin domain in the interval 8–160 (MFKVGPIGSK…LTSIGIYVYP (153 aa)).

The protein belongs to the jacalin lectin family.

The polypeptide is Jacalin-related lectin 24 (JAL24) (Arabidopsis thaliana (Mouse-ear cress)).